The primary structure comprises 1604 residues: Collagen alpha-1(XVI) chain (1604 aa).

Positions 1-21 (MWVSWAPGLWLLGLWATFGHG) are cleaved as a signal peptide. Asparagine 47 carries N-linked (GlcNAc...) asparagine glycosylation. The 182-residue stretch at 50–231 (GFNLIHRLSL…LQQVHIYCDP (182 aa)) folds into the Laminin G-like domain. Residues 232–374 (ELVLEEGCCE…SPDAPLQCAE (143 aa)) are nonhelical region 10 (NC10). The segment covering 301-311 (AERGAKVHQET) has biased composition (basic and acidic residues). The interval 301–509 (AERGAKVHQE…KGEKGDPCEV (209 aa)) is disordered. A glycan (N-linked (GlcNAc...) asparagine) is linked at asparagine 327. The 49-residue stretch at 375–423 (GPKGEKGESGALGPSGLPGSTGEKGQKGEKGDGGIKGVPGKPGRDGRPG) folds into the Collagen-like 1 domain. The segment at 375 to 506 (GPKGEKGESG…PGVKGEKGDP (132 aa)) is triple-helical region 9 (COL9) with 3 imperfections. Low complexity predominate over residues 383-397 (SGALGPSGLPGSTGE). Residues 398–407 (KGQKGEKGDG) are compositionally biased toward basic and acidic residues. Residues 449-460 (PGPPGLPGPPGI) show a composition bias toward pro residues. Residues 486–495 (GKEGPGGKPG) are compositionally biased toward gly residues. Positions 507 to 521 (CEVCPTLPEGFQNFV) are nonhelical region 9 (NC9). The triple-helical region 8 (COL8) with 1 imperfection stretch occupies residues 522–555 (GLPGKPGPKGEPGDPVPARGDPGIQGIKGEKGEP). Positions 540–542 (RGD) match the Cell attachment site motif. Residues 556–572 (CLSCSSVVGAQHLVSST) are nonhelical region 8 (NC8). The triple-helical region 7 (COL7) with 1 imperfection stretch occupies residues 573-631 (GASGDVGSPGFGLPGLPGRAGVPGLKGEKGNFGEAGPAGSPGPPGPVGPAGIKGAKGEP). 2 consecutive Collagen-like domains span residues 573-633 (GASG…EPCE) and 667-721 (GLPG…GEKG). Residues 604–917 (FGEAGPAGSP…PPGIPGPPGP (314 aa)) form a disordered region. The interval 632–652 (CEPCPALSNLQDGDVRVVALP) is nonhelical region 7 (NC7). A triple-helical region 6 (COL6) with 1 imperfection region spans residues 653–723 (GPSGEKGEPG…AGPKGEKGDG (71 aa)). The segment covering 674 to 684 (KAGERGLKGQK) has biased composition (basic and acidic residues). Residues 686–702 (DAGNPGDPGTPGTTGRP) show a composition bias toward low complexity. The interval 724–738 (CTACPSLQGTVTDMA) is nonhelical region 6 (NC6). Positions 739–876 (GRPGQPGPKG…RGEKGEPGEC (138 aa)) are triple-helical region 5 (COL5) with 3 imperfections. Low complexity-rich tracts occupy residues 766–781 (LPGV…VQGE), 792–808 (PQGE…QGLP), and 826–846 (PGVK…SGPP). Positions 788 to 840 (GVQGPQGEPGAPGLPGIQGLPGPRGPPGPTGEKGAQGSPGVKGATGPVGPPGA) constitute a Collagen-like 4 domain. A compositionally biased stretch (basic and acidic residues) spans 864-873 (KGPRGEKGEP). The interval 877–887 (SCPSQGDLIFS) is nonhelical region 5 (NC5). Residues 888-938 (GMPGAPGLWMGSSWQPGPQGPPGIPGPPGPPGVPGLQGVPGNNGLPGQPGL) form the Collagen-like 5 domain. The segment at 888–939 (GMPGAPGLWMGSSWQPGPQGPPGIPGPPGPPGVPGLQGVPGNNGLPGQPGLT) is triple-helical region 4 (COL4) with 2 imperfections. The span at 905–917 (PQGPPGIPGPPGP) shows a compositional bias: pro residues. Positions 940-973 (AELGSLPIEQHLLKSICGDCVQGQRAHPGYLVEK) are nonhelical region 4 (NC4). The tract at residues 974–988 (GEKGDQGIPGVPGLD) is triple-helical region 3 (COL3). Residues 989–1011 (NCAQCFLSLERPRAEEARGDNSE) are nonhelical region 3 (NC3). Disordered stretches follow at residues 1001–1429 (RAEE…VPGS) and 1468–1517 (MAAA…PGTK). A Cell attachment site motif is present at residues 1006 to 1008 (RGD). Positions 1012–1433 (GDPGCVGSPG…PGVPGSMGDM (422 aa)) are triple-helical region 2 (COL2) with 2 imperfections. Positions 1018-1075 (GSPGLPGPPGLPGQRGEEGPPGMRGSPGPPGPIGPPGFPGAVGSPGLPGLQGERGLTG) constitute a Collagen-like 6 domain. Composition is skewed to pro residues over residues 1044–1055 (PGPPGPIGPPGF), 1160–1169 (FPGPPGPPGF), and 1199–1208 (SPGPPGPPGI). The span at 1217–1226 (LDGKDGKPGL) shows a compositional bias: basic and acidic residues. The Cell attachment site motif lies at 1227–1229 (RGD). Positions 1271-1284 (RPGAEGEPGAMGPQ) are enriched in low complexity. Pro residues-rich tracts occupy residues 1286–1302 (RPGP…PGQP) and 1330–1342 (QPGP…PPGE). The span at 1369 to 1378 (DPGAAGQKGQ) shows a compositional bias: low complexity. The segment covering 1386 to 1395 (GMPGGPGKSG) has biased composition (gly residues). Residues 1420–1429 (SPGLPGVPGS) show a composition bias toward low complexity. Residues 1434–1472 (VNYDEIKRFIRQEIIKMFDERMAYYTSRMQFPMEMAAAP) form a nonhelical region 2 (NC2) region. Collagen-like domains follow at residues 1472-1524 (PGRP…GDIG) and 1528-1576 (AGEN…GKAG). The interval 1473–1578 (GRPGPPGKDG…MGQPGKAGHC (106 aa)) is triple-helical region 1 (COL1) with 2 imperfections. Positions 1579–1604 (NPSDCFGAMPMEQQYPPMKTMKGPFG) are nonhelical region 1 (NC1).

Belongs to the fibril-associated collagens with interrupted helices (FACIT) family. In terms of assembly, homotrimer. Interacts with FBN1, fibronectin and integrins ITGA1/ITGB1 and ITGA2/ITGB1. Integrin ITGA1/ITGB1 binds to a unique site within COL16A1 located close to its C-terminal end between collagenous domains COL1-COL3. Post-translationally, prolines at the third position of the tripeptide repeating unit (G-X-Y) are hydroxylated in some or all of the chains. In terms of processing, glycosylated. In terms of tissue distribution, in papillary dermis, is a component of specialized fibrillin-1-containing microfibrils, whereas in territorial cartilage matrix, it is localized to a discrete population of thin, weakly banded collagen fibrils in association with other collagens (at protein level). In the placenta, where it is found in the amnion, a membranous tissue lining the amniotic cavity. Within the amnion, it is found in an acellular, relatively dense layer of a complex network of reticular fibers. Also located to a fibroblast layer beneath this dense layer. Exists in tissues in association with other types of collagen.

The protein resides in the secreted. The protein localises to the extracellular space. It localises to the extracellular matrix. In terms of biological role, involved in mediating cell attachment and inducing integrin-mediated cellular reactions, such as cell spreading and alterations in cell morphology. The protein is Collagen alpha-1(XVI) chain (COL16A1) of Homo sapiens (Human).